The sequence spans 246 residues: Probable phosphatase PBPRB2022 (246 aa).

Zn(2+) contacts are provided by histidine 8, histidine 10, histidine 16, histidine 41, glutamate 74, histidine 102, histidine 132, aspartate 193, and histidine 195.

It belongs to the PHP family. Zn(2+) is required as a cofactor.

The sequence is that of Probable phosphatase PBPRB2022 from Photobacterium profundum (strain SS9).